Here is a 670-residue protein sequence, read N- to C-terminus: DNA ligase (670 aa).

Residues 34-38 (DAEYD), 83-84 (SL), and Glu117 each bind NAD(+). Lys119 functions as the N6-AMP-lysine intermediate in the catalytic mechanism. NAD(+) is bound by residues Arg140, Glu177, Lys293, and Lys317. The Zn(2+) site is built by Cys411, Cys414, Cys429, and Cys434. Positions 591–670 (KVGGRFTGKT…DEFLAMLEEG (80 aa)) constitute a BRCT domain.

Belongs to the NAD-dependent DNA ligase family. LigA subfamily. Mg(2+) is required as a cofactor. Mn(2+) serves as cofactor.

The catalysed reaction is NAD(+) + (deoxyribonucleotide)n-3'-hydroxyl + 5'-phospho-(deoxyribonucleotide)m = (deoxyribonucleotide)n+m + AMP + beta-nicotinamide D-nucleotide.. DNA ligase that catalyzes the formation of phosphodiester linkages between 5'-phosphoryl and 3'-hydroxyl groups in double-stranded DNA using NAD as a coenzyme and as the energy source for the reaction. It is essential for DNA replication and repair of damaged DNA. In Geobacter sulfurreducens (strain ATCC 51573 / DSM 12127 / PCA), this protein is DNA ligase.